We begin with the raw amino-acid sequence, 251 residues long: CDP-diacylglycerol pyrophosphatase (251 aa).

The chain crosses the membrane as a helical span at residues 4 to 24; that stretch reads AGLLFLVMIVIAVVAAGIGYW.

The protein belongs to the Cdh family.

It localises to the cell inner membrane. It carries out the reaction a CDP-1,2-diacyl-sn-glycerol + H2O = a 1,2-diacyl-sn-glycero-3-phosphate + CMP + 2 H(+). It participates in phospholipid metabolism; CDP-diacylglycerol degradation; phosphatidate from CDP-diacylglycerol: step 1/1. This chain is CDP-diacylglycerol pyrophosphatase, found in Escherichia coli (strain ATCC 8739 / DSM 1576 / NBRC 3972 / NCIMB 8545 / WDCM 00012 / Crooks).